The primary structure comprises 112 residues: UPF0102 protein NIS_1551 (112 aa).

It belongs to the UPF0102 family.

In Nitratiruptor sp. (strain SB155-2), this protein is UPF0102 protein NIS_1551.